Here is a 208-residue protein sequence, read N- to C-terminus: Ribosomal RNA small subunit methyltransferase G (208 aa).

S-adenosyl-L-methionine-binding positions include Gly73, Leu78, 127 to 128, and Arg141; that span reads VE.

The protein belongs to the methyltransferase superfamily. RNA methyltransferase RsmG family.

The protein localises to the cytoplasm. It carries out the reaction guanosine(527) in 16S rRNA + S-adenosyl-L-methionine = N(7)-methylguanosine(527) in 16S rRNA + S-adenosyl-L-homocysteine. Functionally, specifically methylates the N7 position of guanine in position 527 of 16S rRNA. The chain is Ribosomal RNA small subunit methyltransferase G from Cereibacter sphaeroides (strain ATCC 17025 / ATH 2.4.3) (Rhodobacter sphaeroides).